Reading from the N-terminus, the 95-residue chain is Putative monooxygenase YcnE (95 aa).

Positions 2 to 93 (IVLQAYIKVK…APLDVVRTEL (92 aa)) constitute an ABM domain. Ser-24 bears the Phosphoserine mark.

This sequence belongs to the LsrG family.

Its function is as follows. Putative monooxygenase that may contribute to the degradation of aromatic compounds. The polypeptide is Putative monooxygenase YcnE (ycnE) (Bacillus subtilis (strain 168)).